Here is a 373-residue protein sequence, read N- to C-terminus: Protein MGF 360-6L (373 aa).

This sequence belongs to the asfivirus MGF 360 family.

Plays a role in virus cell tropism, and may be required for efficient virus replication in macrophages. This is Protein MGF 360-6L from Ornithodoros (relapsing fever ticks).